A 484-amino-acid polypeptide reads, in one-letter code: Muscarinic acetylcholine receptor M4 (484 aa).

At Met-1 to Glu-32 the chain is on the extracellular side. Asn-3, Asn-8, and Asn-14 each carry an N-linked (GlcNAc...) asparagine glycan. Residues Met-33–Met-55 form a helical membrane-spanning segment. The Cytoplasmic segment spans residues Leu-56 to Asn-69. Residues Tyr-70 to Tyr-90 form a helical membrane-spanning segment. At Ser-91–Asp-107 the chain is on the extracellular side. A disulfide bond links Cys-106 and Cys-186. Residues Leu-108–Leu-129 traverse the membrane as a helical segment. At Glu-130 to Met-149 the chain is on the cytoplasmic side. The chain crosses the membrane as a helical span at residues Ala-150–Trp-172. Over Gln-173–Pro-194 the chain is Extracellular. The chain crosses the membrane as a helical span at residues Ala-195–Ile-217. The Cytoplasmic segment spans residues His-218–Thr-406. Residues Asn-255–Ser-316 are disordered. Residues Asp-260–Asn-270 are compositionally biased toward basic and acidic residues. A helical membrane pass occupies residues Ile-407–Ile-427. Over Asn-428–Tyr-441 the chain is Extracellular. Residues Ile-442–Cys-461 traverse the membrane as a helical segment. Residues Asn-462–Arg-484 are Cytoplasmic-facing.

This sequence belongs to the G-protein coupled receptor 1 family. Muscarinic acetylcholine receptor subfamily. CHRM4 sub-subfamily.

The protein localises to the cell membrane. The protein resides in the postsynaptic cell membrane. The muscarinic acetylcholine receptor mediates various cellular responses, including inhibition of adenylate cyclase, breakdown of phosphoinositides and modulation of potassium channels through the action of G proteins. Primary transducing effect is inhibition of adenylate cyclase. In Xenopus laevis (African clawed frog), this protein is Muscarinic acetylcholine receptor M4 (chrm4).